A 334-amino-acid chain; its full sequence is Glycerol-3-phosphate dehydrogenase [NAD(P)+] (334 aa).

Residues Trp-13, Arg-33, and Lys-106 each contribute to the NADPH site. Lys-106, Gly-137, and Ser-139 together coordinate sn-glycerol 3-phosphate. Ala-141 serves as a coordination point for NADPH. Sn-glycerol 3-phosphate-binding residues include Lys-192, Asp-245, Ser-255, Arg-256, and Asn-257. The active-site Proton acceptor is Lys-192. NADPH is bound at residue Arg-256. Positions 280 and 282 each coordinate NADPH.

It belongs to the NAD-dependent glycerol-3-phosphate dehydrogenase family.

Its subcellular location is the cytoplasm. The catalysed reaction is sn-glycerol 3-phosphate + NAD(+) = dihydroxyacetone phosphate + NADH + H(+). The enzyme catalyses sn-glycerol 3-phosphate + NADP(+) = dihydroxyacetone phosphate + NADPH + H(+). It functions in the pathway membrane lipid metabolism; glycerophospholipid metabolism. In terms of biological role, catalyzes the reduction of the glycolytic intermediate dihydroxyacetone phosphate (DHAP) to sn-glycerol 3-phosphate (G3P), the key precursor for phospholipid synthesis. This chain is Glycerol-3-phosphate dehydrogenase [NAD(P)+], found in Chlamydia caviae (strain ATCC VR-813 / DSM 19441 / 03DC25 / GPIC) (Chlamydophila caviae).